A 497-amino-acid polypeptide reads, in one-letter code: Angiopoietin-1 (497 aa).

Positions 1–19 (MTVFLSFAFFAAILTHIGC) are cleaved as a signal peptide. Residues 81–119 (QKLQHLEHVMENYTQWLQKLENYIVENMKSEMAQIQQNA) are a coiled coil. N92, N122, N154, N243, and N294 each carry an N-linked (GlcNAc...) asparagine glycan. Residues 153–261 (LNQTSRLEIQ…LELMDTVHNL (109 aa)) adopt a coiled-coil conformation. The region spanning 276–496 (REEEKPFRDC…STTMMIRPLD (221 aa)) is the Fibrinogen C-terminal domain. 2 disulfide bridges follow: C285–C314 and C438–C451.

As to quaternary structure, homooligomer. Interacts with TEK/TIE2. Interacts with SVEP1/polydom. Interacts with THBD; this interaction significantly inhibits the generation of activated PC and TAFIa/CPB2 by the thrombin/thrombomodulin complex.

Its subcellular location is the secreted. Functionally, binds and activates TIE2 receptor by inducing its tyrosine phosphorylation. Implicated in endothelial developmental processes later and distinct from that of VEGF. Appears to play a crucial role in mediating reciprocal interactions between the endothelium and surrounding matrix and mesenchyme. Mediates blood vessel maturation/stability. It may play an important role in the heart early development. The chain is Angiopoietin-1 (Angpt1) from Rattus norvegicus (Rat).